Consider the following 414-residue polypeptide: WD repeat-containing protein jip5 (414 aa).

WD repeat units follow at residues 9-48 (PLSADLFSQAIHPNEPVVSVGLSTGHVQTFRLPSEESSDD), 73-112 (RHKGSCRCLGFGVDGEMLYSAGTDGLVKAAKAETGVVENK), 118-159 (AKDG…SNVS), 222-263 (VSSV…DQDE), and 319-356 (DETEGVIGLGFDVEGRMVSGGGQVVKVWHEAVGSNDMD). A disordered region spans residues 39–65 (RLPSEESSDDDDGTASNSSARNGKGHI). Residues 357–414 (VDMAGGKRMFGGDSDDSDDDNDSEDSEQEQRQPVEPQRKRKKNKGKGKRDIIAFADID) are disordered. A compositionally biased stretch (acidic residues) spans 369 to 383 (DSDDSDDDNDSEDSE). Residues 394–403 (RKRKKNKGKG) are compositionally biased toward basic residues.

This sequence belongs to the WD repeat WDR55 family.

It is found in the nucleus. It localises to the nucleolus. In Aspergillus clavatus (strain ATCC 1007 / CBS 513.65 / DSM 816 / NCTC 3887 / NRRL 1 / QM 1276 / 107), this protein is WD repeat-containing protein jip5 (jip5).